A 210-amino-acid chain; its full sequence is LexA repressor (210 aa).

The segment at residues 28-48 (FEEIAEGMGLSSLATVHKHIG) is a DNA-binding region (H-T-H motif). Catalysis depends on for autocatalytic cleavage activity residues S131 and K169.

The protein belongs to the peptidase S24 family. Homodimer.

It carries out the reaction Hydrolysis of Ala-|-Gly bond in repressor LexA.. In terms of biological role, represses a number of genes involved in the response to DNA damage (SOS response), including recA and lexA. In the presence of single-stranded DNA, RecA interacts with LexA causing an autocatalytic cleavage which disrupts the DNA-binding part of LexA, leading to derepression of the SOS regulon and eventually DNA repair. The polypeptide is LexA repressor (Koribacter versatilis (strain Ellin345)).